Here is a 993-residue protein sequence, read N- to C-terminus: Glycogen phosphorylase 2 (993 aa).

The tract at residues 1-82 (MEEKRSTNSP…SNQSEDPATQ (82 aa)) is disordered. The span at 19–48 (RSGSITSATSHPPRSNSNPKLVAKHQQQLY) shows a compositional bias: polar residues. Low complexity predominate over residues 58–77 (EQQNQQPQQQQQKQTSNQSE). An N6-(pyridoxal phosphate)lysine modification is found at lysine 763. Residues 962 to 981 (VISGGDKTNNTLKPKQTTKG) are compositionally biased toward polar residues. A disordered region spans residues 962–993 (VISGGDKTNNTLKPKQTTKGFNIGGQPGNPTN). The segment covering 983–993 (NIGGQPGNPTN) has biased composition (gly residues).

Belongs to the glycogen phosphorylase family. In terms of assembly, homodimer. Pyridoxal 5'-phosphate is required as a cofactor. Post-translationally, the N-terminus is blocked. Enzyme activity requires processing of the 113 kDa peptide to an enzymatically active 106 kDa form of the protein. Processing would occur near the middle of the Gln-rich repetitive element.

The enzyme catalyses [(1-&gt;4)-alpha-D-glucosyl](n) + phosphate = [(1-&gt;4)-alpha-D-glucosyl](n-1) + alpha-D-glucose 1-phosphate. In terms of biological role, phosphorylase is an important allosteric enzyme in carbohydrate metabolism. Enzymes from different sources differ in their regulatory mechanisms and in their natural substrates. However, all known phosphorylases share catalytic and structural properties. This Dictyostelium discoideum (Social amoeba) protein is Glycogen phosphorylase 2 (glpD).